The following is a 308-amino-acid chain: tRNA pseudouridine synthase B (308 aa).

Asp-46 functions as the Nucleophile in the catalytic mechanism.

Belongs to the pseudouridine synthase TruB family. Type 1 subfamily.

It catalyses the reaction uridine(55) in tRNA = pseudouridine(55) in tRNA. Functionally, responsible for synthesis of pseudouridine from uracil-55 in the psi GC loop of transfer RNAs. This chain is tRNA pseudouridine synthase B, found in Marinomonas sp. (strain MWYL1).